Here is a 33-residue protein sequence, read N- to C-terminus: Pardaxin P-3 (33 aa).

This sequence belongs to the pardaxin family. As to quaternary structure, in aqueous solution exists as a tetramer.

The protein localises to the secreted. Its subcellular location is the target cell membrane. Functionally, exhibits unusual shark repellent and surfactant properties. Forms voltage-dependent, ion-permeable channels in membranes. At high concentration causes cell membrane lysis. In Pardachirus pavoninus (Peacock sole), this protein is Pardaxin P-3.